A 64-amino-acid chain; its full sequence is Prokaryotic ubiquitin-like protein Pup (64 aa).

Residues 1-11 show a composition bias toward basic and acidic residues; the sequence is MAQEQTKRGGG. A disordered region spans residues 1-37; it reads MAQEQTKRGGGGDDEDDFASSTAAGQERREKLAEDTD. The segment at 21 to 58 is ARC ATPase binding; it reads STAAGQERREKLAEDTDDLLDEIDDVLEENAEDFVRAY. A coiled-coil region spans residues 24-52; that stretch reads AGQERREKLAEDTDDLLDEIDDVLEENAE. A Deamidated glutamine modification is found at Q64. Q64 is covalently cross-linked (Isoglutamyl lysine isopeptide (Gln-Lys) (interchain with K-? in acceptor proteins)).

This sequence belongs to the prokaryotic ubiquitin-like protein family. In terms of assembly, strongly interacts with the proteasome-associated ATPase ARC through a hydrophobic interface; the interacting region of Pup lies in its C-terminal half. There is one Pup binding site per ARC hexamer ring. Post-translationally, is modified by deamidation of its C-terminal glutamine to glutamate by the deamidase Dop, a prerequisite to the subsequent pupylation process.

Its pathway is protein degradation; proteasomal Pup-dependent pathway. Protein modifier that is covalently attached to lysine residues of substrate proteins, thereby targeting them for proteasomal degradation. The tagging system is termed pupylation. This Mycolicibacterium paratuberculosis (strain ATCC BAA-968 / K-10) (Mycobacterium paratuberculosis) protein is Prokaryotic ubiquitin-like protein Pup.